Reading from the N-terminus, the 186-residue chain is Cell division protein ZapC (186 aa).

This sequence belongs to the ZapC family. As to quaternary structure, interacts directly with FtsZ.

Its subcellular location is the cytoplasm. Its function is as follows. Contributes to the efficiency of the cell division process by stabilizing the polymeric form of the cell division protein FtsZ. Acts by promoting interactions between FtsZ protofilaments and suppressing the GTPase activity of FtsZ. This is Cell division protein ZapC from Musicola paradisiaca (strain Ech703) (Dickeya paradisiaca).